The sequence spans 364 residues: Putative F-box/kelch-repeat protein At1g12170 (364 aa).

The F-box domain occupies 1 to 50 (MMHVILPWELVEEILYRVPPLSLTRFKIVCKQWNTLFKSKSFVNNHLVRV). 2 Kelch repeats span residues 156-205 (SIYN…LNGN) and 328-364 (CVYI…IPVP).

The protein is Putative F-box/kelch-repeat protein At1g12170 of Arabidopsis thaliana (Mouse-ear cress).